The primary structure comprises 95 residues: Cliotide T5 (95 aa).

The cyclopeptide (Gly-Asn) cross-link spans 1 to 30 (GIPCGESCVFIPCISTVIGCSCKNKVCYRN). Cystine bridges form between Cys-4-Cys-20, Cys-8-Cys-22, and Cys-13-Cys-27. Positions 31-95 (HVIAAEAKTM…KDHLKMSITN (65 aa)) are cleaved as a propeptide — removed in mature form.

Contains 3 disulfide bonds. Post-translationally, this is a cyclic peptide. In terms of tissue distribution, expressed in stem, shoot, root, leaf, pod and nodule but not in flower and seed (at protein level).

Its function is as follows. Probably participates in a plant defense mechanism. This is Cliotide T5 from Clitoria ternatea (Butterfly pea).